The chain runs to 112 residues: T cell receptor alpha variable 17 (112 aa).

A signal peptide spans 1 to 21 (METLLGVSLVILWLQLARVNS). Residues 22–112 (QQGEEDPQAL…DTASYFCATD (91 aa)) enclose the Ig-like domain. Asparagine 38 and asparagine 42 each carry an N-linked (GlcNAc...) asparagine glycan. An intrachain disulfide couples cysteine 43 to cysteine 109.

As to quaternary structure, alpha-beta TR is a heterodimer composed of an alpha and beta chain; disulfide-linked. The alpha-beta TR is associated with the transmembrane signaling CD3 coreceptor proteins to form the TR-CD3 (TcR or TCR). The assembly of alpha-beta TR heterodimers with CD3 occurs in the endoplasmic reticulum where a single alpha-beta TR heterodimer associates with one CD3D-CD3E heterodimer, one CD3G-CD3E heterodimer and one CD247 homodimer forming a stable octameric structure. CD3D-CD3E and CD3G-CD3E heterodimers preferentially associate with TR alpha and TR beta chains, respectively. The association of the CD247 homodimer is the last step of TcR assembly in the endoplasmic reticulum and is required for transport to the cell surface.

Its subcellular location is the cell membrane. V region of the variable domain of T cell receptor (TR) alpha chain that participates in the antigen recognition. Alpha-beta T cell receptors are antigen specific receptors which are essential to the immune response and are present on the cell surface of T lymphocytes. Recognize peptide-major histocompatibility (MH) (pMH) complexes that are displayed by antigen presenting cells (APC), a prerequisite for efficient T cell adaptive immunity against pathogens. Binding of alpha-beta TR to pMH complex initiates TR-CD3 clustering on the cell surface and intracellular activation of LCK that phosphorylates the ITAM motifs of CD3G, CD3D, CD3E and CD247 enabling the recruitment of ZAP70. In turn ZAP70 phosphorylates LAT, which recruits numerous signaling molecules to form the LAT signalosome. The LAT signalosome propagates signal branching to three major signaling pathways, the calcium, the mitogen-activated protein kinase (MAPK) kinase and the nuclear factor NF-kappa-B (NF-kB) pathways, leading to the mobilization of transcription factors that are critical for gene expression and essential for T cell growth and differentiation. The T cell repertoire is generated in the thymus, by V-(D)-J rearrangement. This repertoire is then shaped by intrathymic selection events to generate a peripheral T cell pool of self-MH restricted, non-autoaggressive T cells. Post-thymic interaction of alpha-beta TR with the pMH complexes shapes TR structural and functional avidity. The chain is T cell receptor alpha variable 17 from Homo sapiens (Human).